Consider the following 164-residue polypeptide: Transcriptional regulator MraZ (164 aa).

SpoVT-AbrB domains are found at residues 7-60 and 83-126; these read HYTN…EIDG and SEIL…EPGR. A disordered region spans residues 144-164; the sequence is QLSARHAAPDAPPLRSHGARE.

Belongs to the MraZ family. In terms of assembly, forms oligomers.

Its subcellular location is the cytoplasm. The protein resides in the nucleoid. The chain is Transcriptional regulator MraZ from Methylocella silvestris (strain DSM 15510 / CIP 108128 / LMG 27833 / NCIMB 13906 / BL2).